A 387-amino-acid polypeptide reads, in one-letter code: Probable 1-alkyl-2-acetylglycerophosphocholine esterase (387 aa).

Positions 1 to 17 (MLVQGTIICALVANAIA) are cleaved as a signal peptide. Residues N51 and N141 are each glycosylated (N-linked (GlcNAc...) asparagine). Catalysis depends on S227, which acts as the Nucleophile. D250 acts as the Charge relay system in catalysis. N283 carries an N-linked (GlcNAc...) asparagine glycan. H313 acts as the Charge relay system in catalysis.

The protein belongs to the AB hydrolase superfamily. Lipase family.

Its subcellular location is the secreted. The catalysed reaction is a 1-O-alkyl-2-acetyl-sn-glycero-3-phosphocholine + H2O = a 1-O-alkyl-sn-glycero-3-phosphocholine + acetate + H(+). This chain is Probable 1-alkyl-2-acetylglycerophosphocholine esterase, found in Arthroderma benhamiae (strain ATCC MYA-4681 / CBS 112371) (Trichophyton mentagrophytes).